An 816-amino-acid chain; its full sequence is Probable E3 ubiquitin-protein ligase hulA (816 aa).

Positions 1 to 112 (MGSNLPAQPN…QMGGDEMLTR (112 aa)) constitute a C2 domain. Disordered regions lie at residues 134-238 (NLST…WERR) and 253-353 (RTTT…YFVD). Composition is skewed to polar residues over residues 151–168 (MQPS…ASTP), 177–202 (ADPT…STIV), 217–226 (SRTNLSSFED), and 253–270 (RTTT…QTSR). The 34-residue stretch at 229–262 (GRLPAGWERREDNLGRTYYVDHNTRTTTWTRPSN) folds into the WW 1 domain. The span at 279–294 (LERRAHQSRMLPEDRT) shows a compositional bias: basic and acidic residues. The span at 295–309 (GASSPNLQENQQQAQ) shows a compositional bias: polar residues. The segment covering 310–333 (TPPAGGSASAVSMMATGATTAGTG) has biased composition (low complexity). WW domains follow at residues 333 to 366 (GELP…DPRR) and 393 to 426 (GPLP…DPRL). The HECT domain occupies 482-816 (SASDLKKRLM…VEETLGFGQE (335 aa)). The active-site Glycyl thioester intermediate is the C784.

It belongs to the RSP5/NEDD4 family. As to quaternary structure, interacts with creD.

It is found in the cytoplasm. It catalyses the reaction S-ubiquitinyl-[E2 ubiquitin-conjugating enzyme]-L-cysteine + [acceptor protein]-L-lysine = [E2 ubiquitin-conjugating enzyme]-L-cysteine + N(6)-ubiquitinyl-[acceptor protein]-L-lysine.. It participates in protein modification; protein ubiquitination. E3 ubiquitin-protein ligase which accepts ubiquitin from an E2 ubiquitin-conjugating enzyme in the form of a thioester and then directly transfers the ubiquitin to targeted substrates. Probably involved in the regulatory network controlling carbon source utilization. This is Probable E3 ubiquitin-protein ligase hulA (hulA) from Aspergillus oryzae (strain ATCC 42149 / RIB 40) (Yellow koji mold).